The following is a 1168-amino-acid chain: DNA-directed RNA polymerase subunit beta (1168 aa).

Belongs to the RNA polymerase beta chain family. In terms of assembly, the RNAP catalytic core consists of 2 alpha, 1 beta, 1 beta' and 1 omega subunit. When a sigma factor is associated with the core the holoenzyme is formed, which can initiate transcription.

It carries out the reaction RNA(n) + a ribonucleoside 5'-triphosphate = RNA(n+1) + diphosphate. Functionally, DNA-dependent RNA polymerase catalyzes the transcription of DNA into RNA using the four ribonucleoside triphosphates as substrates. The polypeptide is DNA-directed RNA polymerase subunit beta (Rhodococcus jostii (strain RHA1)).